Reading from the N-terminus, the 188-residue chain is Putative manganese efflux pump MntP (188 aa).

The next 6 membrane-spanning stretches (helical) occupy residues 2–22, 39–59, 67–87, 107–127, 129–149, and 166–186; these read IMGNLELFLIAVGLSMDAFAV, LITGLFFGGFQALMPLIGFLL, ITAIDHWIAFILLSLIGLNMI, IILSLATSIDALAVGITFAFL, VDIVPAVSMIGVTTFLFSFLG, and LAGGVILILMGLKILLEHLGF.

The protein belongs to the MntP (TC 9.B.29) family.

The protein localises to the cell membrane. Its function is as follows. Probably functions as a manganese efflux pump. This chain is Putative manganese efflux pump MntP, found in Desulfitobacterium hafniense (strain Y51).